Reading from the N-terminus, the 1514-residue chain is ABC transporter C family member 5 (1514 aa).

10 consecutive transmembrane segments (helical) span residues 16–36 (LLELCSVIINLLLFLVFLFAV), 76–96 (FGFNLSLLCCLYVLGVQVLVL), 111–131 (FVLCFPASQSLAWFVLSFLVL), 142–162 (PFLVRIWWFLAFSICLCTMYV), 177–197 (SHVVANLAVTPALGFLCFLAW), 312–332 (VFAGLNTLVSYVGPYLISYFV), 334–354 (YLGGKEIFPHEGYVLAGIFFT), 421–441 (WYLHDIWMLPMQIVLALAILY), 446–466 (IAAVATLVATIISILVTIPLA), and 533–553 (FIFWSSPIFVAAVTFATSIFL). The ABC transmembrane type-1 1 domain occupies 307–588 (AACNAVFAGL…FPDLVSMMAQ (282 aa)). One can recognise an ABC transporter 1 domain in the interval 622–845 (IEIKDGVFCW…GTDFKALVSA (224 aa)). Position 657–664 (657–664 (GTVGSGKS)) interacts with ATP. The stretch at 899-927 (ASDLKAIKEKKKKAKRSRKKQLVQEEERV) forms a coiled coil. A run of 6 helical transmembrane segments spans residues 946 to 966 (GALIPLIILAQAAFQFLQIAS), 986 to 1006 (PTLLLIVYTALAFGSSVFIFV), 1078 to 1098 (IVAVMTNVTWQVFLLVVPVAV), 1117 to 1137 (IVSIQKSPIIHLFGESIAGAA), 1155 to 1175 (LLDCFVRPFFCSIAAIEWLCL), and 1180 to 1200 (LSTLVFAFCMVLLVSFPHGTI). Positions 949 to 1231 (IPLIILAQAA…WILSFCKLEN (283 aa)) constitute an ABC transmembrane type-1 2 domain. The region spanning 1268–1502 (IELVDVKVRY…KSSMFLKLVT (235 aa)) is the ABC transporter 2 domain. Residue 1302–1309 (GRTGSGKS) participates in ATP binding.

This sequence belongs to the ABC transporter superfamily. ABCC family. Conjugate transporter (TC 3.A.1.208) subfamily. Ubiquitous, mostly in vascular tissues and epidermis, including guard cells.

Its subcellular location is the membrane. It carries out the reaction ATP + H2O + xenobioticSide 1 = ADP + phosphate + xenobioticSide 2.. (E(2)17G) transport activity in negatively regulated by organic anions such as oestradiol-3-sulfate, luteolin-7-O-diglucuronide-4'-O-glucuronide, glycocholate, vanadate and the sulfonylurea glibenclamide, and, to a lower extent, by bafilomycin A1, NH(4)Cl, GSH, GSSG and DNB-GS. Its function is as follows. Pump for glutathione S-conjugates. Involved in regulation of K(+) and Na(+) cell content. Mediates resistance to NaCl and Li(+), confers sensitivity to sulfonylurea drugs such as glibenclamide (inducer of stomatal opening), and required for stomatal opening regulation by auxin, abscisic acid (ABA) and external Ca(2+). Transports oestradiol-17-(beta-D-glucuronide) (E(2)17G). Involved in the root auxin content regulation that controls the transition from primary root elongation to lateral root formation. Plays a role in ABA-mediated germination inhibition. High-affinity inositol hexakisphosphate transporter that plays a role in guard cell signaling and phytic acid storage. Required for phytic acid accumulation in developing seeds. Phytic acid is the primary storage form of phosphorus in cereal grains and other plant seeds. The chain is ABC transporter C family member 5 (ABCC5) from Arabidopsis thaliana (Mouse-ear cress).